Consider the following 70-residue polypeptide: Squirrel monkey agnoprotein (70 aa).

Interacts with VP1. Interacts with Large T antigen. Interacts with small t antigen. Post-translationally, phosphorylated by host PKC. Phosphorylation alters the stability and may also have an impact on the subcellular location.

The protein resides in the host cytoplasm. Its subcellular location is the host nucleus. Its function is as follows. Alters the structure of the nuclear envelope. Involved in the perinuclear-nuclear localization of the capsid protein VP1 during virion assembly and maturation. May contribute to viral genome transcription and translation of viral late proteins. Plays an important role in the release of progeny virions from infected cells and in viral propagation. This is Squirrel monkey agnoprotein (agnogene) from Saimiri boliviensis boliviensis (Bolivian squirrel monkey).